Consider the following 89-residue polypeptide: Small ribosomal subunit protein uS15 (89 aa).

Over residues 1–21 (MSVDAETKTKIIKDNARDKND) the composition is skewed to basic and acidic residues. The tract at residues 1 to 26 (MSVDAETKTKIIKDNARDKNDTGSPE) is disordered.

The protein belongs to the universal ribosomal protein uS15 family. In terms of assembly, part of the 30S ribosomal subunit. Forms a bridge to the 50S subunit in the 70S ribosome, contacting the 23S rRNA.

In terms of biological role, one of the primary rRNA binding proteins, it binds directly to 16S rRNA where it helps nucleate assembly of the platform of the 30S subunit by binding and bridging several RNA helices of the 16S rRNA. Functionally, forms an intersubunit bridge (bridge B4) with the 23S rRNA of the 50S subunit in the ribosome. This Erythrobacter litoralis (strain HTCC2594) protein is Small ribosomal subunit protein uS15.